The chain runs to 432 residues: MSSIASVFGREILDSRGNPTVEVEVTLESGLRARAAVPSGASTGSREALEMRDGDKARYCGKGVTKAVDHVNSEIADALLGMDSLRQVQIDNTLIDLDGTDNKSRLGANAMLGVSMACARVAASFLGLPLYKYLGGINAKVLPAPMMNIINGGAHAPNNLDIQEFMIMPVGAMTFRDSLRMGTEIFHMLQAILKKDGHVTSVGDEGGFAPNLKNHDEAFAYIIKAIEEAGYNPGTEVALAIDAASSEFYKDGKYVLAGEGKTFNSAELSEWMAEFTRKYPLISIEDGMAESDWDGWGMLTASLGDHVQLVGDDVFVTNPSILAEGIAEGVANSILIKLNQIGTVTETLDTIEMAKEAAYTTVISHRSGETEDSFIADLAVGVNSGQIKTGSLCRSERMSKYNQLLRIEEELGDDAEFFGPMLAEYYSLGTEE.

Position 163 (glutamine 163) interacts with (2R)-2-phosphoglycerate. The active-site Proton donor is glutamate 205. Mg(2+)-binding residues include aspartate 242, glutamate 285, and aspartate 312. Residues lysine 337, arginine 366, serine 367, and lysine 388 each contribute to the (2R)-2-phosphoglycerate site. Lysine 337 functions as the Proton acceptor in the catalytic mechanism.

The protein belongs to the enolase family. Mg(2+) is required as a cofactor.

It localises to the cytoplasm. The protein localises to the secreted. It is found in the cell surface. The enzyme catalyses (2R)-2-phosphoglycerate = phosphoenolpyruvate + H2O. It participates in carbohydrate degradation; glycolysis; pyruvate from D-glyceraldehyde 3-phosphate: step 4/5. Functionally, catalyzes the reversible conversion of 2-phosphoglycerate (2-PG) into phosphoenolpyruvate (PEP). It is essential for the degradation of carbohydrates via glycolysis. In Desulfovibrio desulfuricans (strain ATCC 27774 / DSM 6949 / MB), this protein is Enolase.